The following is a 332-amino-acid chain: tRNA U34 carboxymethyltransferase (332 aa).

Carboxy-S-adenosyl-L-methionine contacts are provided by residues Lys-96, Trp-110, Lys-115, Gly-135, 186–187 (LE), Met-204, Tyr-208, and Arg-323.

The protein belongs to the class I-like SAM-binding methyltransferase superfamily. CmoB family. As to quaternary structure, homotetramer.

It carries out the reaction carboxy-S-adenosyl-L-methionine + 5-hydroxyuridine(34) in tRNA = 5-carboxymethoxyuridine(34) in tRNA + S-adenosyl-L-homocysteine + H(+). Catalyzes carboxymethyl transfer from carboxy-S-adenosyl-L-methionine (Cx-SAM) to 5-hydroxyuridine (ho5U) to form 5-carboxymethoxyuridine (cmo5U) at position 34 in tRNAs. This is tRNA U34 carboxymethyltransferase from Hydrogenovibrio crunogenus (strain DSM 25203 / XCL-2) (Thiomicrospira crunogena).